Reading from the N-terminus, the 202-residue chain is MVVVGVLALQGDWIEHIELLREIEGVEAVPVKTEKQLESIDALIIPGGESTTIGRLIERRGLLEPLRDRIRAGLPVLGTCAGSILLAKKVRDRVVGPVEQPLLAVMDIAVLRNAFGRQMNSFEAEVHIEGVGTVHAAFIRAPIIEETWGEARPIAKLNHPLLGEVTVAARQKAIIATVFHPEITGDSKLHKLLVAAAKGRAF.

Position 48 to 50 (48 to 50) interacts with L-glutamine; sequence GES. The active-site Nucleophile is Cys-80. L-glutamine is bound by residues Arg-112 and 139-140; that span reads IR. Residues His-180 and Glu-182 each act as charge relay system in the active site.

This sequence belongs to the glutaminase PdxT/SNO family. In the presence of PdxS, forms a dodecamer of heterodimers. Only shows activity in the heterodimer.

It carries out the reaction aldehydo-D-ribose 5-phosphate + D-glyceraldehyde 3-phosphate + L-glutamine = pyridoxal 5'-phosphate + L-glutamate + phosphate + 3 H2O + H(+). It catalyses the reaction L-glutamine + H2O = L-glutamate + NH4(+). It functions in the pathway cofactor biosynthesis; pyridoxal 5'-phosphate biosynthesis. In terms of biological role, catalyzes the hydrolysis of glutamine to glutamate and ammonia as part of the biosynthesis of pyridoxal 5'-phosphate. The resulting ammonia molecule is channeled to the active site of PdxS. The protein is Pyridoxal 5'-phosphate synthase subunit PdxT of Hyperthermus butylicus (strain DSM 5456 / JCM 9403 / PLM1-5).